A 126-amino-acid chain; its full sequence is Ribosome-binding factor A (126 aa).

It belongs to the RbfA family. In terms of assembly, monomer. Binds 30S ribosomal subunits, but not 50S ribosomal subunits or 70S ribosomes.

Its subcellular location is the cytoplasm. Functionally, one of several proteins that assist in the late maturation steps of the functional core of the 30S ribosomal subunit. Associates with free 30S ribosomal subunits (but not with 30S subunits that are part of 70S ribosomes or polysomes). Required for efficient processing of 16S rRNA. May interact with the 5'-terminal helix region of 16S rRNA. This Histophilus somni (strain 129Pt) (Haemophilus somnus) protein is Ribosome-binding factor A.